A 434-amino-acid polypeptide reads, in one-letter code: Phosphomethylpyrimidine synthase (434 aa).

Substrate-binding positions include Asn74, Met103, Tyr132, His171, 193–195, 234–237, and Glu273; these read SRG and DGIR. His277 lines the Zn(2+) pocket. Residue Tyr300 participates in substrate binding. His341 is a binding site for Zn(2+). 3 residues coordinate [4Fe-4S] cluster: Cys417, Cys420, and Cys424.

It belongs to the ThiC family. Homodimer. [4Fe-4S] cluster serves as cofactor.

It catalyses the reaction 5-amino-1-(5-phospho-beta-D-ribosyl)imidazole + S-adenosyl-L-methionine = 4-amino-2-methyl-5-(phosphooxymethyl)pyrimidine + CO + 5'-deoxyadenosine + formate + L-methionine + 3 H(+). The protein operates within cofactor biosynthesis; thiamine diphosphate biosynthesis. Catalyzes the synthesis of the hydroxymethylpyrimidine phosphate (HMP-P) moiety of thiamine from aminoimidazole ribotide (AIR) in a radical S-adenosyl-L-methionine (SAM)-dependent reaction. The chain is Phosphomethylpyrimidine synthase from Desulfotalea psychrophila (strain LSv54 / DSM 12343).